Here is a 382-residue protein sequence, read N- to C-terminus: Galactokinase (382 aa).

34 to 37 is a substrate binding site; it reads EHTD. 124-130 provides a ligand contact to ATP; it reads GAGLSSS. Mg(2+) contacts are provided by serine 130 and glutamate 162. Residue aspartate 174 is the Proton acceptor of the active site. Position 223 (tyrosine 223) interacts with substrate.

It belongs to the GHMP kinase family. GalK subfamily.

It is found in the cytoplasm. The enzyme catalyses alpha-D-galactose + ATP = alpha-D-galactose 1-phosphate + ADP + H(+). The protein operates within carbohydrate metabolism; galactose metabolism. Functionally, catalyzes the transfer of the gamma-phosphate of ATP to D-galactose to form alpha-D-galactose-1-phosphate (Gal-1-P). The chain is Galactokinase from Salmonella paratyphi C (strain RKS4594).